We begin with the raw amino-acid sequence, 383 residues long: Envelope glycoprotein D (383 aa).

The signal sequence occupies residues 1 to 30 (MPAATMATPGYLACRTSVATLLFFVLLRRA). The Virion surface segment spans residues 31–358 (AILGAGGAPS…PKVVGPTVGP (328 aa)). 3 cysteine pairs are disulfide-bonded: Cys76–Cys197, Cys115–Cys212, and Cys127–Cys136. Positions 244–311 (YQDKLKVASP…TSASGVIEIE (68 aa)) are profusion. The segment at 315–349 (ESDVRLVSYPPPTLPSPGPGGNENGAGYSDNRPDP) is disordered. Pro residues predominate over residues 323-332 (YPPPTLPSPG). A helical membrane pass occupies residues 359 to 379 (GAIILVVMCAPILIGLTAFTI). Residues 380 to 383 (RKYC) are Intravirion-facing.

Belongs to the herpesviridae glycoprotein D family.

It is found in the virion membrane. In terms of biological role, envelope glycoprotein that binds to host cell entry receptors, promoting the virus entry into host cells. May trigger fusion with host membrane, by recruiting the fusion machinery composed of gB and gH/gL. The sequence is that of Envelope glycoprotein D (US6) from Amazona oratrix (yellow-headed parrot).